Here is a 785-residue protein sequence, read N- to C-terminus: Semaphorin-3F (785 aa).

The N-terminal stretch at 1–18 is a signal peptide; the sequence is MLVAGLLLWASLLTGAWP. The Sema domain occupies 31-545; it reads RVRLSFKELK…SAVGVTHLSL (515 aa). The N-linked (GlcNAc...) asparagine glycan is linked to N53. Residues C104 and C115 are joined by a disulfide bond. N126 carries N-linked (GlcNAc...) asparagine glycosylation. Disulfide bonds link C133-C142, C300-C412, C324-C372, C548-C566, and C678-C746. Residues 605–690 form the Ig-like C2-type domain; that stretch reads ANKNAVESVQ…TENNFKHVVT (86 aa). The segment at 752–785 is disordered; that stretch reads HVPPSPREAPGAPRSPEPQDQKKPRNRRHHPPDT. The span at 775-785 shows a compositional bias: basic residues; sequence PRNRRHHPPDT.

Belongs to the semaphorin family. As to expression, expressed abundantly but differentially in a variety of neural and nonneural tissues. There is high expression in mammary gland, kidney, fetal brain, and lung and lower expression in heart and liver.

It is found in the secreted. Functionally, may play a role in cell motility and cell adhesion. In Homo sapiens (Human), this protein is Semaphorin-3F (SEMA3F).